Here is a 188-residue protein sequence, read N- to C-terminus: Peptide deformylase (188 aa).

Fe cation-binding residues include Cys109 and His152. Glu153 is an active-site residue. Fe cation is bound at residue His156.

Belongs to the polypeptide deformylase family. The cofactor is Fe(2+).

It catalyses the reaction N-terminal N-formyl-L-methionyl-[peptide] + H2O = N-terminal L-methionyl-[peptide] + formate. In terms of biological role, removes the formyl group from the N-terminal Met of newly synthesized proteins. Requires at least a dipeptide for an efficient rate of reaction. N-terminal L-methionine is a prerequisite for activity but the enzyme has broad specificity at other positions. In Chloroflexus aurantiacus (strain ATCC 29366 / DSM 635 / J-10-fl), this protein is Peptide deformylase.